A 319-amino-acid chain; its full sequence is NH(3)-dependent NAD(+) synthetase (319 aa).

33-40 (GLSGGIDS) serves as a coordination point for ATP. Asp-39 provides a ligand contact to Mg(2+). Arg-169 contributes to the deamido-NAD(+) binding site. Thr-189 is a binding site for ATP. Residue Glu-194 coordinates Mg(2+). Residues Lys-202 and Asp-209 each coordinate deamido-NAD(+). Residues Lys-218 and Thr-240 each contribute to the ATP site.

This sequence belongs to the NAD synthetase family. In terms of assembly, homodimer.

It carries out the reaction deamido-NAD(+) + NH4(+) + ATP = AMP + diphosphate + NAD(+) + H(+). It participates in cofactor biosynthesis; NAD(+) biosynthesis; NAD(+) from deamido-NAD(+) (ammonia route): step 1/1. Functionally, catalyzes the ATP-dependent amidation of deamido-NAD to form NAD. Uses ammonia as a nitrogen source. The polypeptide is NH(3)-dependent NAD(+) synthetase (Mesorhizobium japonicum (strain LMG 29417 / CECT 9101 / MAFF 303099) (Mesorhizobium loti (strain MAFF 303099))).